The following is a 361-amino-acid chain: Free fatty acid receptor 4 (361 aa).

Topologically, residues 1 to 45 (MSPECARAAGDAPLRSLEQANRTRFPFFSDVKGDHRLVLAAVETT) are extracellular. Asn21 carries an N-linked (GlcNAc...) asparagine glycan. The chain crosses the membrane as a helical span at residues 46–66 (VLVLIFAVSLLGNVCALVLVA). At 67–77 (RRRRRGATACL) the chain is on the cytoplasmic side. A helical membrane pass occupies residues 78–98 (VLNLFCADLLFISAIPLVLAV). Residues 99–112 (RWTEAWLLGPVACH) lie on the Extracellular side of the membrane. Cysteines 111 and 194 form a disulfide. The helical transmembrane segment at 113 to 133 (LLFYVMTLSGSVTILTLAAVS) threads the bilayer. Residues 134 to 156 (LERMVCIVHLQRGVRGPGRRARA) are Cytoplasmic-facing. The chain crosses the membrane as a helical span at residues 157-177 (VLLALIWGYSAVAALPLCVFF). Over 178–204 (RVVPQRLPGADQEISICTLIWPTIPGE) the chain is Extracellular. The helical transmembrane segment at 205–225 (ISWDVSFVTLNFLVPGLVIVI) threads the bilayer. Topologically, residues 226–268 (SYSKILQITKASRKRLTVSLAYSESHQIRVSQQDFRLFRTLFL) are cytoplasmic. The chain crosses the membrane as a helical span at residues 269–289 (LMVSFFIMWSPIIITILLILI). Residues 290–295 (QNFKQD) are Extracellular-facing. The chain crosses the membrane as a helical span at residues 296–316 (LVIWPSLFFWVVAFTFANSAL). At 317–361 (NPILYNMTLCRNEWKKIFCCFWFPEKGAILTDTSVKRNDLSIISG) the chain is on the cytoplasmic side. Phosphothreonine is present on residues Thr347 and Thr349. Residues Ser350, Ser357, and Ser360 each carry the phosphoserine modification.

It belongs to the G-protein coupled receptor 1 family. Interacts (via C-terminus) with ARRB2 following LCFAs stimulation. Post-translationally, phosphorylated at two clusters of Ser and Thr residues located in the intracellular C-terminus, a prerequisite for FFAR4 internalization via an ARRB2-dependent pathway. The predominant isoform in human tissues. Expressed in adipose tissue, pancreatic islets, lung and brain. Expressed in alpha cells of pancreatic islets. Expressed in primary cilia of perivascular preadipocytes of white adipose tissue (at protein level). As to expression, abundant expression in the intestinal tract. Expressed in colonic intraepithelial neuroendocrine cells.

The protein resides in the cell membrane. It is found in the endosome membrane. Its subcellular location is the lysosome membrane. The protein localises to the cell projection. It localises to the cilium membrane. G-protein-coupled receptor for long-chain fatty acids (LCFAs) with a major role in adipogenesis, energy metabolism and inflammation. Signals via G-protein and beta-arrestin pathways. LCFAs sensing initiates activation of phosphoinositidase C-linked G proteins GNAQ and GNA11 (G(q)/G(11)), inducing a variety of cellular responses via second messenger pathways such as intracellular calcium mobilization, modulation of cyclic adenosine monophosphate (cAMP) production, and mitogen-activated protein kinases (MAPKs). After LCFAs binding, associates with beta-arrestin ARRB2 that acts as an adapter protein coupling the receptor to specific downstream signaling pathways, as well as mediating receptor endocytosis. In response to dietary fats, plays an important role in the regulation of adipocyte proliferation and differentiation. Acts as a receptor for omega-3 polyunsaturated fatty acids (PUFAs) at primary cilium of perivascular preadipocytes, initiating an adipogenic program via cAMP and CTCF-dependent chromatin remodeling that ultimately results in transcriptional activation of adipogenic genes and cell cycle entry. Induces differentiation of brown adipocytes probably via autocrine and endocrine functions of FGF21 hormone. Activates brown adipocytes by initiating intracellular calcium signaling that leads to mitochondrial depolarization and fission, and overall increased mitochondrial respiration. Consequently stimulates fatty acid uptake and oxidation in mitochondria together with UCP1-mediated thermogenic respiration, eventually reducing fat mass. Regulates bi-potential differentiation of bone marrow mesenchymal stem cells toward osteoblasts or adipocytes likely by up-regulating distinct integrins. In response to dietary fats regulates hormone secretion and appetite. Stimulates GIP and GLP1 secretion from enteroendocrine cells as well as GCG secretion in pancreatic alpha cells, thereby playing a role in the regulation of blood glucose levels. Negatively regulates glucose-induced SST secretion in pancreatic delta cells. Mediates LCFAs inhibition of GHRL secretion, an appetite-controlling hormone. In taste buds, contributes to sensing of dietary fatty acids by the gustatory system. During the inflammatory response, promotes anti-inflammatory M2 macrophage differentiation in adipose tissue. Mediates the anti-inflammatory effects of omega-3 PUFAs via inhibition of NLRP3 inflammasome activation. In this pathway, interacts with adapter protein ARRB2 and inhibits the priming step triggered by Toll-like receptors (TLRs) at the level of TAK1 and TAB1. Further inhibits the activation step when ARRB2 directly associates with NLRP3, leading to inhibition of pro-inflammatory cytokine release. Mediates LCFAs anti-apoptotic effects. Functionally, receptor for LCFAs decoupled from G-protein signaling. May signal through beta-arrestin pathway. After LCFAs binding, associates with beta-arrestin ARRB2 that may act as an adapter protein coupling the receptor to specific downstream signaling pathways, as well as mediating receptor endocytosis. The sequence is that of Free fatty acid receptor 4 from Homo sapiens (Human).